Consider the following 94-residue polypeptide: UPF0235 protein TK0768 (94 aa).

It belongs to the UPF0235 family.

This chain is UPF0235 protein TK0768, found in Thermococcus kodakarensis (strain ATCC BAA-918 / JCM 12380 / KOD1) (Pyrococcus kodakaraensis (strain KOD1)).